A 611-amino-acid chain; its full sequence is Actin-interacting protein 1 (611 aa).

WD repeat units follow at residues Glu-57 to Lys-96, Gly-145 to Thr-185, Glu-188 to Val-227, Ala-237 to Thr-276, Gly-322 to Val-361, Pro-446 to Val-485, Val-489 to His-528, Phe-534 to Ile-573, and His-579 to Pro-610.

The protein belongs to the WD repeat AIP1 family.

It is found in the cytoplasm. Its subcellular location is the cytoskeleton. In terms of biological role, induces disassembly of actin filaments in conjunction with ADF/cofilin family proteins. Regulator of actin organization in myofibrils. The chain is Actin-interacting protein 1 (unc-78) from Caenorhabditis elegans.